The following is a 64-amino-acid chain: DNA-binding protein 7a (64 aa).

N6-methyllysine; partial occurs at positions 5 and 7.

The protein belongs to the 7 kDa DNA-binding/endoribonuclease P2 family. Homodimer. Lys-5 and Lys-7 were found to be 60% monomethylated. In terms of processing, ADP-ribosylated by endogenous proteins in vitro.

Can constrain negative DNA supercoils. May be involved in maintaining the integrity of the genome at high temperature. Has RNA endonuclease activity with a narrow substrate specificity; the cleavage products are 3'-phosphooligonucleotides. This Saccharolobus solfataricus (strain ATCC 35092 / DSM 1617 / JCM 11322 / P2) (Sulfolobus solfataricus) protein is DNA-binding protein 7a (sso7a1).